A 250-amino-acid chain; its full sequence is Flavin-dependent thymidylate synthase (250 aa).

The 227-residue stretch at 7–233 (LRVQLIAKTD…PSIFGDFDIA (227 aa)) folds into the ThyX domain. Residues Ser-71, 95–97 (RHR), and Gln-103 each bind FAD. Residues 92-95 (ELIR), 103-107 (QLSQR), and Arg-172 each bind dUMP. A ThyX motif motif is present at residues 95 to 105 (RHRHFSYSQLS). Residues 188 to 190 (NYR) and His-194 each bind FAD. DUMP is bound at residue Arg-199. Arg-199 acts as the Involved in ionization of N3 of dUMP, leading to its activation in catalysis.

Belongs to the thymidylate synthase ThyX family. In terms of assembly, homotetramer. FAD is required as a cofactor.

The enzyme catalyses dUMP + (6R)-5,10-methylene-5,6,7,8-tetrahydrofolate + NADPH + H(+) = dTMP + (6S)-5,6,7,8-tetrahydrofolate + NADP(+). It participates in pyrimidine metabolism; dTTP biosynthesis. Catalyzes the reductive methylation of 2'-deoxyuridine-5'-monophosphate (dUMP) to 2'-deoxythymidine-5'-monophosphate (dTMP) while utilizing 5,10-methylenetetrahydrofolate (mTHF) as the methyl donor, and NADPH and FADH(2) as the reductant. In Mycobacteroides abscessus (strain ATCC 19977 / DSM 44196 / CCUG 20993 / CIP 104536 / JCM 13569 / NCTC 13031 / TMC 1543 / L948) (Mycobacterium abscessus), this protein is Flavin-dependent thymidylate synthase.